Here is a 314-residue protein sequence, read N- to C-terminus: Nucleotide-binding protein CE1710 (314 aa).

Residues 1–29 (MNQTPGSTVPETATPVTSPASSPSAPETT) are disordered. Residues 7–29 (STVPETATPVTSPASSPSAPETT) show a composition bias toward low complexity. Position 37–44 (37–44 (GMSGAGLS)) interacts with ATP. 88 to 91 (DVRS) is a GTP binding site.

Belongs to the RapZ-like family.

In terms of biological role, displays ATPase and GTPase activities. The polypeptide is Nucleotide-binding protein CE1710 (Corynebacterium efficiens (strain DSM 44549 / YS-314 / AJ 12310 / JCM 11189 / NBRC 100395)).